Consider the following 205-residue polypeptide: Probable GTP-binding protein EngB (205 aa).

An EngB-type G domain is found at 27–201 (TGIEIAFAGR…AAKLDFWFSP (175 aa)). GTP contacts are provided by residues 35-42 (GRSNAGKS), 62-66 (GRTQL), 80-83 (DLPG), 147-150 (TKAD), and 180-182 (FSA). Mg(2+)-binding residues include serine 42 and threonine 64.

It belongs to the TRAFAC class TrmE-Era-EngA-EngB-Septin-like GTPase superfamily. EngB GTPase family. Mg(2+) is required as a cofactor.

Its function is as follows. Necessary for normal cell division and for the maintenance of normal septation. The polypeptide is Probable GTP-binding protein EngB (Haemophilus influenzae (strain 86-028NP)).